The primary structure comprises 84 residues: Beta-toxin Ct16 (84 aa).

The signal sequence occupies residues 1–19 (MNYFILLFVATFLLLDVNC). Residues 21–80 (KDGYPVDANNCKFECWKNEYCDELCKAKRAESGYCYKLKLSCWCEGLPDDEPTKTSDRCY) enclose the LCN-type CS-alpha/beta domain. Disulfide bonds link Cys-31/Cys-79, Cys-35/Cys-55, Cys-41/Cys-62, and Cys-45/Cys-64. Thr-82 bears the Threonine amide mark.

The protein belongs to the long (4 C-C) scorpion toxin superfamily. Sodium channel inhibitor family. Alpha subfamily. In terms of tissue distribution, expressed by the venom gland.

It is found in the secreted. In terms of biological role, alpha toxins bind voltage-independently at site-3 of sodium channels (Nav) and inhibit the inactivation of the activated channels, thereby blocking neuronal transmission. Is possibly toxic to mice. The polypeptide is Beta-toxin Ct16 (Centruroides tecomanus (Scorpion)).